Consider the following 134-residue polypeptide: Large ribosomal subunit protein uL22 (134 aa).

The protein belongs to the universal ribosomal protein uL22 family. As to quaternary structure, part of the 50S ribosomal subunit.

In terms of biological role, this protein binds specifically to 23S rRNA; its binding is stimulated by other ribosomal proteins, e.g. L4, L17, and L20. It is important during the early stages of 50S assembly. It makes multiple contacts with different domains of the 23S rRNA in the assembled 50S subunit and ribosome. Its function is as follows. The globular domain of the protein is located near the polypeptide exit tunnel on the outside of the subunit, while an extended beta-hairpin is found that lines the wall of the exit tunnel in the center of the 70S ribosome. The polypeptide is Large ribosomal subunit protein uL22 (Gluconacetobacter diazotrophicus (strain ATCC 49037 / DSM 5601 / CCUG 37298 / CIP 103539 / LMG 7603 / PAl5)).